We begin with the raw amino-acid sequence, 320 residues long: Ubiquinone biosynthesis protein COQ4, mitochondrial (320 aa).

The transit peptide at 1–31 (MFARSALGRSDQLVTALNSQKRQFVLTAATT) directs the protein to the mitochondrion. Zn(2+)-binding residues include histidine 205, aspartate 206, histidine 209, and glutamate 221.

It belongs to the COQ4 family. As to quaternary structure, component of a multi-subunit COQ enzyme complex, composed of at least COQ3, COQ4, COQ5, COQ6, COQ7 and COQ9. It depends on Zn(2+) as a cofactor.

It localises to the mitochondrion inner membrane. It carries out the reaction a 4-hydroxy-3-methoxy-5-(all-trans-polyprenyl)benzoate + H(+) = a 2-methoxy-6-(all-trans-polyprenyl)phenol + CO2. It participates in cofactor biosynthesis; ubiquinone biosynthesis. Its function is as follows. Lyase that catalyzes the C1-decarboxylation of 4-hydroxy-3-methoxy-5-(all-trans-polyprenyl)benzoic acid into 2-methoxy-6-(all-trans-polyprenyl)phenol during ubiquinone biosynthesis. This Scheffersomyces stipitis (strain ATCC 58785 / CBS 6054 / NBRC 10063 / NRRL Y-11545) (Yeast) protein is Ubiquinone biosynthesis protein COQ4, mitochondrial.